Reading from the N-terminus, the 141-residue chain is Large ribosomal subunit protein uL11 (141 aa).

It belongs to the universal ribosomal protein uL11 family. In terms of assembly, part of the ribosomal stalk of the 50S ribosomal subunit. Interacts with L10 and the large rRNA to form the base of the stalk. L10 forms an elongated spine to which L12 dimers bind in a sequential fashion forming a multimeric L10(L12)X complex. Post-translationally, one or more lysine residues are methylated.

In terms of biological role, forms part of the ribosomal stalk which helps the ribosome interact with GTP-bound translation factors. The chain is Large ribosomal subunit protein uL11 from Prochlorococcus marinus subsp. pastoris (strain CCMP1986 / NIES-2087 / MED4).